Reading from the N-terminus, the 494-residue chain is UPF0371 protein SP_0341 (494 aa).

This sequence belongs to the UPF0371 family.

The polypeptide is UPF0371 protein SP_0341 (Streptococcus pneumoniae serotype 4 (strain ATCC BAA-334 / TIGR4)).